The chain runs to 406 residues: Serine/threonine transporter SstT (406 aa).

Helical transmembrane passes span 21-41, 45-65, 79-99, 138-158, 179-199, 213-233, 285-305, 313-333, and 360-380; these read LIIG…VAIL, FVGA…MGAI, ILIL…IASF, ALMN…GLAL, VVKW…FDSI, LLLL…PLIV, ISIP…IAVL, LGIT…AIAA, and IAMQ…SCET.

Belongs to the dicarboxylate/amino acid:cation symporter (DAACS) (TC 2.A.23) family.

The protein localises to the cell membrane. The enzyme catalyses L-serine(in) + Na(+)(in) = L-serine(out) + Na(+)(out). It catalyses the reaction L-threonine(in) + Na(+)(in) = L-threonine(out) + Na(+)(out). Its function is as follows. Involved in the import of serine and threonine into the cell, with the concomitant import of sodium (symport system). The polypeptide is Serine/threonine transporter SstT (Desulfitobacterium hafniense (strain Y51)).